A 429-amino-acid chain; its full sequence is 3-phosphoshikimate 1-carboxyvinyltransferase (429 aa).

3 residues coordinate 3-phosphoshikimate: Lys23, Ser24, and Arg28. Phosphoenolpyruvate is bound at residue Lys23. 2 residues coordinate phosphoenolpyruvate: Gly95 and Arg123. The 3-phosphoshikimate site is built by Ser168, Gln170, Asp316, and Lys343. Gln170 is a binding site for phosphoenolpyruvate. The active-site Proton acceptor is the Asp316. 2 residues coordinate phosphoenolpyruvate: Arg347 and Arg389.

Belongs to the EPSP synthase family. Monomer.

It is found in the cytoplasm. The catalysed reaction is 3-phosphoshikimate + phosphoenolpyruvate = 5-O-(1-carboxyvinyl)-3-phosphoshikimate + phosphate. The protein operates within metabolic intermediate biosynthesis; chorismate biosynthesis; chorismate from D-erythrose 4-phosphate and phosphoenolpyruvate: step 6/7. Functionally, catalyzes the transfer of the enolpyruvyl moiety of phosphoenolpyruvate (PEP) to the 5-hydroxyl of shikimate-3-phosphate (S3P) to produce enolpyruvyl shikimate-3-phosphate and inorganic phosphate. The sequence is that of 3-phosphoshikimate 1-carboxyvinyltransferase from Bacillus cereus (strain 03BB102).